Here is a 184-residue protein sequence, read N- to C-terminus: U3 small nucleolar ribonucleoprotein protein IMP3 (184 aa).

Residues 109 to 175 (RRLPTVLLKL…IKRHVLEYNE (67 aa)) enclose the S4 RNA-binding domain.

Belongs to the universal ribosomal protein uS4 family. Part of the small subunit (SSU) processome, composed of more than 70 proteins and the RNA chaperone small nucleolar RNA (snoRNA) U3. Component of a heterotrimeric complex containing IMP3, IMP4 and MPHOSPH10. Interacts with MPHOSPH10.

It is found in the nucleus. Its subcellular location is the nucleolus. Component of the 60-80S U3 small nucleolar ribonucleoprotein (U3 snoRNP). Required for the early cleavages during pre-18S ribosomal RNA processing. Part of the small subunit (SSU) processome, first precursor of the small eukaryotic ribosomal subunit. During the assembly of the SSU processome in the nucleolus, many ribosome biogenesis factors, an RNA chaperone and ribosomal proteins associate with the nascent pre-rRNA and work in concert to generate RNA folding, modifications, rearrangements and cleavage as well as targeted degradation of pre-ribosomal RNA by the RNA exosome. The polypeptide is U3 small nucleolar ribonucleoprotein protein IMP3 (Homo sapiens (Human)).